Consider the following 401-residue polypeptide: Imidazolonepropionase (401 aa).

Fe(3+) contacts are provided by H66 and H68. The Zn(2+) site is built by H66 and H68. Residues R75, Y138, and H171 each coordinate 4-imidazolone-5-propanoate. Y138 contributes to the N-formimidoyl-L-glutamate binding site. Position 236 (H236) interacts with Fe(3+). Residue H236 participates in Zn(2+) binding. Q239 contacts 4-imidazolone-5-propanoate. D311 provides a ligand contact to Fe(3+). D311 contacts Zn(2+). Residues N313 and G315 each coordinate N-formimidoyl-L-glutamate. T316 lines the 4-imidazolone-5-propanoate pocket.

Belongs to the metallo-dependent hydrolases superfamily. HutI family. It depends on Zn(2+) as a cofactor. Requires Fe(3+) as cofactor.

Its subcellular location is the cytoplasm. The catalysed reaction is 4-imidazolone-5-propanoate + H2O = N-formimidoyl-L-glutamate. Its pathway is amino-acid degradation; L-histidine degradation into L-glutamate; N-formimidoyl-L-glutamate from L-histidine: step 3/3. Catalyzes the hydrolytic cleavage of the carbon-nitrogen bond in imidazolone-5-propanoate to yield N-formimidoyl-L-glutamate. It is the third step in the universal histidine degradation pathway. The chain is Imidazolonepropionase from Pseudomonas putida (Arthrobacter siderocapsulatus).